Consider the following 765-residue polypeptide: Phosphoribosylformylglycinamidine synthase subunit PurL (765 aa).

Residue H59 is part of the active site. ATP-binding residues include Y62 and K104. E106 is a binding site for Mg(2+). Substrate is bound by residues 107 to 110 (SHNH) and R129. H108 (proton acceptor) is an active-site residue. D130 is a binding site for Mg(2+). Q254 contacts substrate. D282 is a binding site for Mg(2+). 326 to 328 (ESQ) contributes to the substrate binding site. ATP-binding residues include N522 and G559. N560 is a binding site for Mg(2+). S562 serves as a coordination point for substrate.

Belongs to the FGAMS family. In terms of assembly, monomer. Part of the FGAM synthase complex composed of 1 PurL, 1 PurQ and 2 PurS subunits.

The protein localises to the cytoplasm. It catalyses the reaction N(2)-formyl-N(1)-(5-phospho-beta-D-ribosyl)glycinamide + L-glutamine + ATP + H2O = 2-formamido-N(1)-(5-O-phospho-beta-D-ribosyl)acetamidine + L-glutamate + ADP + phosphate + H(+). It functions in the pathway purine metabolism; IMP biosynthesis via de novo pathway; 5-amino-1-(5-phospho-D-ribosyl)imidazole from N(2)-formyl-N(1)-(5-phospho-D-ribosyl)glycinamide: step 1/2. In terms of biological role, part of the phosphoribosylformylglycinamidine synthase complex involved in the purines biosynthetic pathway. Catalyzes the ATP-dependent conversion of formylglycinamide ribonucleotide (FGAR) and glutamine to yield formylglycinamidine ribonucleotide (FGAM) and glutamate. The FGAM synthase complex is composed of three subunits. PurQ produces an ammonia molecule by converting glutamine to glutamate. PurL transfers the ammonia molecule to FGAR to form FGAM in an ATP-dependent manner. PurS interacts with PurQ and PurL and is thought to assist in the transfer of the ammonia molecule from PurQ to PurL. The protein is Phosphoribosylformylglycinamidine synthase subunit PurL of Thermobifida fusca (strain YX).